A 375-amino-acid polypeptide reads, in one-letter code: Chaperone protein DnaJ (375 aa).

The J domain maps to 5–70 (DFYETLGVAK…QKRAAYDRYG (66 aa)). The CR-type zinc-finger motif lies at 136–214 (GKTAQIRVPT…CHGQGRVTEE (79 aa)). Residues Cys149, Cys152, Cys166, Cys169, Cys188, Cys191, Cys202, and Cys205 each coordinate Zn(2+). CXXCXGXG motif repeat units lie at residues 149–156 (CDVCSGSG), 166–173 (CGTCQGTG), 188–195 (CPTCHGRG), and 202–209 (CPKCHGQG).

Belongs to the DnaJ family. Homodimer. Requires Zn(2+) as cofactor.

Its subcellular location is the cytoplasm. In terms of biological role, participates actively in the response to hyperosmotic and heat shock by preventing the aggregation of stress-denatured proteins and by disaggregating proteins, also in an autonomous, DnaK-independent fashion. Unfolded proteins bind initially to DnaJ; upon interaction with the DnaJ-bound protein, DnaK hydrolyzes its bound ATP, resulting in the formation of a stable complex. GrpE releases ADP from DnaK; ATP binding to DnaK triggers the release of the substrate protein, thus completing the reaction cycle. Several rounds of ATP-dependent interactions between DnaJ, DnaK and GrpE are required for fully efficient folding. Also involved, together with DnaK and GrpE, in the DNA replication of plasmids through activation of initiation proteins. In Rhizobium johnstonii (strain DSM 114642 / LMG 32736 / 3841) (Rhizobium leguminosarum bv. viciae), this protein is Chaperone protein DnaJ.